The chain runs to 492 residues: Aspartate aminotransferase (492 aa).

A chloroplast-targeting transit peptide spans 1 to 66; the sequence is MMSASFKCPV…KGSCCLFNIR (66 aa). Residues Gly-119, Trp-206, and Asn-256 each coordinate L-aspartate. The residue at position 319 (Lys-319) is an N6-(pyridoxal phosphate)lysine. Arg-458 contributes to the L-aspartate binding site.

It belongs to the class-I pyridoxal-phosphate-dependent aminotransferase family. In terms of assembly, homodimer. The cofactor is pyridoxal 5'-phosphate.

Its subcellular location is the plastid. The protein resides in the chloroplast. The enzyme catalyses L-aspartate + 2-oxoglutarate = oxaloacetate + L-glutamate. Its function is as follows. Prokaryotic-type aspartate aminotransferase. Specific for aspartate and no activity with glutamine, asparagine, alanine, histidine, leucine, methionine, lysine, arginine, tryptophan, tyrosine, phenylalanine or kynurenine. The polypeptide is Aspartate aminotransferase (AAT) (Pinus pinaster (Maritime pine)).